The primary structure comprises 1098 residues: Transcription elongation regulator 1 (1098 aa).

Over residues 1-15 (MAERGGDGGESERFN) the composition is skewed to basic and acidic residues. A disordered region spans residues 1–105 (MAERGGDGGE…RPPFMPPPMS (105 aa)). Ser11 is subject to Phosphoserine. Residue Arg20 is modified to Omega-N-methylarginine. Asymmetric dimethylarginine is present on residues Arg28, Arg30, Arg41, and Arg48. Pro residues predominate over residues 32–105 (PAPPPNAVMR…RPPFMPPPMS (74 aa)). The WW 1 domain maps to 131–164 (PPTEEIWVENKTPDGKVYYYNARTRESAWTKPDG). Residues 184-244 (QAQAQAQAQA…AQAQAQAQVQ (61 aa)) are a coiled coil. A compositionally biased stretch (low complexity) spans 259–333 (STPTTSSPAP…PTATPVQTVP (75 aa)). The interval 259-348 (STPTTSSPAP…TLPPAVPHSV (90 aa)) is disordered. The span at 334–344 (QPHPQTLPPAV) shows a compositional bias: pro residues. One can recognise a WW 2 domain in the interval 429-462 (ATAVSEWTEYKTADGKTYYYNNRTLESTWEKPQE). 2 stretches are compositionally biased toward basic and acidic residues: residues 469-481 (LEEK…KEPS) and 496-506 (EEPIKEIKEEP). The interval 469 to 526 (LEEKIKEPIKEPSEEPLPMETEEEDPKEEPIKEIKEEPKEEEMTEEEKAAQKAKPVAT) is disordered. Residues Lys503 and Lys507 each participate in a glycyl lysine isopeptide (Lys-Gly) (interchain with G-Cter in SUMO2) cross-link. The WW 3 domain maps to 528-561 (PIPGTPWCVVWTGDERVFFYNPTTRLSMWDRPDD). A coiled-coil region spans residues 606 to 655 (AIKEEQELMEEINEDEPVKAKKRKRDDNKDIDSEKEAAMEAEIKAARERA). Lys608 is covalently cross-linked (Glycyl lysine isopeptide (Lys-Gly) (interchain with G-Cter in SUMO2)). The tract at residues 615 to 640 (EEINEDEPVKAKKRKRDDNKDIDSEK) is disordered. The short motif at 626–630 (KKRKR) is the Nuclear localization signal element. The segment covering 630–640 (RDDNKDIDSEK) has biased composition (basic and acidic residues). Phosphoserine is present on Ser638. FF domains follow at residues 659 to 712 (LEAR…YVKT), 725 to 779 (IMQA…FVAA), and 791 to 846 (RGEK…YIEK). Phosphoserine is present on Ser834. A coiled-coil region spans residues 844–906 (IEKIAKNLDS…EEAIQNFKAL (63 aa)). The segment at 870–895 (REREREVQKARSEQTKEIDREREQHK) is disordered. 3 consecutive FF domains span residues 896-952 (REEA…HIEA), 954-1010 (TKKK…YIRD), and 1012-1077 (YITA…YVDD). Ser933 is subject to Phosphoserine. Positions 1076–1098 (DDLDRRGPPPPPTASEPTRRSTK) are disordered.

Binds formin. Interacts (via the second WW domain) with TREX1 (via proline-rich region). Binds RNA polymerase II, HD and SF1. Detected in brain neurons.

It is found in the nucleus. In terms of biological role, transcription factor that binds RNA polymerase II and inhibits the elongation of transcripts from target promoters. Regulates transcription elongation in a TATA box-dependent manner. Necessary for TAT-dependent activation of the human immunodeficiency virus type 1 (HIV-1) promoter. The sequence is that of Transcription elongation regulator 1 (TCERG1) from Homo sapiens (Human).